The following is a 54-amino-acid chain: Large ribosomal subunit protein bL32 (54 aa).

Belongs to the bacterial ribosomal protein bL32 family.

The sequence is that of Large ribosomal subunit protein bL32 from Buchnera aphidicola subsp. Baizongia pistaciae (strain Bp).